A 186-amino-acid polypeptide reads, in one-letter code: Elongation factor P (186 aa).

The protein belongs to the elongation factor P family.

The protein localises to the cytoplasm. Its pathway is protein biosynthesis; polypeptide chain elongation. Its function is as follows. Involved in peptide bond synthesis. Stimulates efficient translation and peptide-bond synthesis on native or reconstituted 70S ribosomes in vitro. Probably functions indirectly by altering the affinity of the ribosome for aminoacyl-tRNA, thus increasing their reactivity as acceptors for peptidyl transferase. In Neisseria gonorrhoeae (strain ATCC 700825 / FA 1090), this protein is Elongation factor P.